Here is a 786-residue protein sequence, read N- to C-terminus: Endonuclease MutS2 (786 aa).

An ATP-binding site is contributed by 332-339; the sequence is GPNTGGKT. The Smr domain maps to 710 to 785; it reads VDLRGLDAEE…GDGVTMVELK (76 aa).

It belongs to the DNA mismatch repair MutS family. MutS2 subfamily. In terms of assembly, homodimer. Binds to stalled ribosomes, contacting rRNA.

Endonuclease that is involved in the suppression of homologous recombination and thus may have a key role in the control of bacterial genetic diversity. Functionally, acts as a ribosome collision sensor, splitting the ribosome into its 2 subunits. Detects stalled/collided 70S ribosomes which it binds and splits by an ATP-hydrolysis driven conformational change. Acts upstream of the ribosome quality control system (RQC), a ribosome-associated complex that mediates the extraction of incompletely synthesized nascent chains from stalled ribosomes and their subsequent degradation. Probably generates substrates for RQC. This is Endonuclease MutS2 from Clostridium beijerinckii (strain ATCC 51743 / NCIMB 8052) (Clostridium acetobutylicum).